Reading from the N-terminus, the 981-residue chain is MLPNRKPPRPSPSFQSLNNNNQRFPLRRSLKIAQAHSLPTVPSEDAKDDDLITPELSTDFDFREIQHRYLMALQNEQDGETTSTDDAFFELDDDDDLSSPSVPGSPVDPPSISVPLPPKSAPPCPTQPAPLTNGDLYPTILSNGTPIPNGRITPALSTVSVSLIHEARLQQSLSTPCNGSEEEMHNGQVRKESEYRRFKSEGSTAGASLPAAEKTHMDELSPVDQRSTSGTARFLIQQDSVVNPSTKMSNTEQVAMMHTLKTKLSKYQAMMDKAFEEIAKVEDANIIEGCTIVRKLMRKVWNTPKVSADLANALCDYLRDRDYFDKLIKMFISPNTAACDQVRMECGKVLEECTSSANLEYIVNKSYTKKIMIVAMKLNKTPDQQRLSLSLIGNLFKHSNAVSLSLIETDVIDHIILTFKRAPECPDILRHAALALANILLYTCFEGKKKIIQKKIPEWLFFLASQADDVTRYYACIAVCTIVSVKEFEPLVRKSDTMKLVEPFLQVHDPATFARDYHKYAQGNTKEWLERLLPMLQPSRRREARSVAAFHFTLEATIKKEQNKLDVFQEIGAIQALKEVASSPDEVAAKFASEALTVIGEEVPYKLAQQVPGWTCADVQYWVKKIGFEEYVEKFAKQMVDGDLLLQLTENDLKHDVGMISGLHRKRFLRELQTLKVAADYSSVDESNLDNFLMGLSPELSVYTYQMLTNGVNRSLLSSLTDEMMQNACGITNPIHRLKLTQAFETAKHPDDVEVAMLSKQIDVFISYRRSTGNQLASLIKVLLQLRGYRVFIDVDKLYAGKFDSSLLKNIQAAKHFILVLTPNSLDRLLNDDNCEDWVHKELKCAFEHQKNIIPIFDTAFEFPTKEDQIPNDIRMITKYNGVKWVHDYQDACMAKVVRFITGELNRTTPTTKEMPSISRKTTQQRWQTTNTVSRTGPSRSIGGPRMEPPTPTFTPTGSQERATSTRRKIQPSASTTSDRN.

3 disordered regions span residues 1-31 (MLPN…RSLK), 74-128 (QNEQ…PTQP), and 173-225 (LSTP…PVDQ). 2 stretches are compositionally biased toward polar residues: residues 12 to 23 (PSFQSLNNNNQR) and 74 to 85 (QNEQDGETTSTD). Over residues 87–97 (AFFELDDDDDL) the composition is skewed to acidic residues. A compositionally biased stretch (low complexity) spans 98 to 114 (SSPSVPGSPVDPPSISV). Residues 115–128 (PLPPKSAPPCPTQP) show a composition bias toward pro residues. The span at 182-200 (EEMHNGQVRKESEYRRFKS) shows a compositional bias: basic and acidic residues. 2 SAM domains span residues 614–678 (WTCA…LKVA) and 684–750 (VDES…AKHP). The 98-residue stretch at 760 to 857 (KQIDVFISYR…EHQKNIIPIF (98 aa)) folds into the TIR domain. Position 769-770 (769-770 (RR)) interacts with NAD(+). The active site involves Glu842. 3 stretches are compositionally biased toward polar residues: residues 908 to 939 (TTPT…TGPS), 954 to 963 (FTPTGSQERA), and 972 to 981 (PSASTTSDRN). The interval 908–981 (TTPTTKEMPS…PSASTTSDRN (74 aa)) is disordered.

It belongs to the SARM1 family. Homodimer. Interacts with rab-1, pal-1 and unc-43. Highly expressed in hypodermis. Localizes to postsynaptic regions of axons.

The protein resides in the cytoplasm. It carries out the reaction NAD(+) + H2O = ADP-D-ribose + nicotinamide + H(+). NAD(+) hydrolase, which plays a key role in non-apoptotic cell death by regulating NAD(+) metabolism. In response to stress, homooligomerizes and catalyzes cleavage of NAD(+) into ADP-D-ribose (ADPR) and nicotinamide; NAD(+) cleavage promoting non-apoptotic neuronal cell death. In males, involved in non-apoptotic death of the linker cell which guides gonad elongation during larval development. Required for both innate immune response and specification of AWC(OFF) neuron. During late embryogenesis, it acts downstream of CAMKII (unc-43) to regulate specification of asymmetric odorant receptors in AWC(OFF) neuron via the nsy-1/ASK1 pmk-1/p38 MAP kinase signaling cascade. Required to localize nsy-1 to postsynaptic regions of AWC neuron, suggesting that it may act by assembling a signaling complex that regulate odorant receptor expression. Also plays a central role in resistance to infection to a broad range of bacterial and fungi pathogens, possibly by activating pmk-1, independently of the NF-kappa-B pathway. Required for expression of antimicrobial peptides nlp-29 and nlp-31. Its role in immune response and neuron specification may be mediated by the same nsy-1/ASK1 pmk-1/p38 MAP kinase cascade signaling pathway. Involved in the response to anoxic conditions probably by activating the p38 pathway composed of nsy-1/sek-1/pmk-1. Involved in regulation of the serotonergic response of ADF neurons to pathogenic food. In addition, plays a role in the up-regulation of gcs-1 upon arsenite treatment, most likely through activation of pmk-1, to confer protection against toxicity induced by heavy metals. In terms of biological role, regulates expression of antimicrobial peptide nlp-29 in response to fungal infection or physical injury. In Caenorhabditis elegans, this protein is NAD(+) hydrolase tir-1.